A 621-amino-acid polypeptide reads, in one-letter code: Archaeal Lon protease (621 aa).

Residues Met-1–Gln-117 are Cytoplasmic-facing. An ATP-binding site is contributed by Gly-54 to Ser-61. The helical transmembrane segment at Ala-118–Leu-136 threads the bilayer. Topologically, residues Thr-137–Asn-141 are extracellular. A helical membrane pass occupies residues Leu-142 to Ile-160. Residues Pro-161–Val-621 lie on the Cytoplasmic side of the membrane. In terms of domain architecture, Lon proteolytic spans Gly-423–Asp-602. Residues Ser-509 and Lys-552 contribute to the active site.

The protein belongs to the peptidase S16 family. Archaeal LonB subfamily. In terms of assembly, homohexamer. Organized in a ring with a central cavity.

It is found in the cell membrane. In terms of biological role, ATP-dependent serine protease that mediates the selective degradation of mutant and abnormal proteins as well as certain short-lived regulatory proteins. Degrades polypeptides processively. The sequence is that of Archaeal Lon protease from Archaeoglobus fulgidus (strain ATCC 49558 / DSM 4304 / JCM 9628 / NBRC 100126 / VC-16).